Reading from the N-terminus, the 757-residue chain is Endonuclease MutS2 (757 aa).

321–328 (GPNMGGKT) contributes to the ATP binding site. The Smr domain occupies 681–756 (IDIRGMTVEE…GTGVTVVEVE (76 aa)).

This sequence belongs to the DNA mismatch repair MutS family. MutS2 subfamily. Homodimer. Binds to stalled ribosomes, contacting rRNA.

Functionally, endonuclease that is involved in the suppression of homologous recombination and thus may have a key role in the control of bacterial genetic diversity. Acts as a ribosome collision sensor, splitting the ribosome into its 2 subunits. Detects stalled/collided 70S ribosomes which it binds and splits by an ATP-hydrolysis driven conformational change. Acts upstream of the ribosome quality control system (RQC), a ribosome-associated complex that mediates the extraction of incompletely synthesized nascent chains from stalled ribosomes and their subsequent degradation. Probably generates substrates for RQC. This chain is Endonuclease MutS2, found in Thermotoga neapolitana (strain ATCC 49049 / DSM 4359 / NBRC 107923 / NS-E).